The following is a 486-amino-acid chain: Homoserine O-acetyltransferase (486 aa).

Residues 66–436 (NVLVICHALT…PEGHDAFLLE (371 aa)) enclose the AB hydrolase-1 domain. S162 acts as the Nucleophile in catalysis. The disordered stretch occupies residues 248 to 281 (KFSRRSPSIAQQQKAQREETRKPSTVSEHSLQIH). Polar residues-rich tracts occupy residues 250 to 261 (SRRSPSIAQQQK) and 270 to 280 (PSTVSEHSLQI). Catalysis depends on residues D401 and H430.

Belongs to the AB hydrolase superfamily. MetX family.

It localises to the cytoplasm. The catalysed reaction is L-homoserine + acetyl-CoA = O-acetyl-L-homoserine + CoA. Its pathway is amino-acid biosynthesis; L-methionine biosynthesis via de novo pathway; O-acetyl-L-homoserine from L-homoserine: step 1/1. In terms of biological role, commits homoserine to the methionine biosynthesis pathway by catalyzing its O-acetylation. This Saccharomyces cerevisiae (strain ATCC 204508 / S288c) (Baker's yeast) protein is Homoserine O-acetyltransferase (MET2).